We begin with the raw amino-acid sequence, 200 residues long: Riboflavin kinase (200 aa).

The disordered stretch occupies residues 1 to 20; it reads MATARPSIVGPDSGPESPFP. Thr42 and Asn44 together coordinate Mg(2+). The active-site Nucleophile is Glu110.

Belongs to the flavokinase family. It depends on Zn(2+) as a cofactor. Requires Mg(2+) as cofactor.

The catalysed reaction is riboflavin + ATP = FMN + ADP + H(+). Its pathway is cofactor biosynthesis; FMN biosynthesis; FMN from riboflavin (ATP route): step 1/1. Functionally, catalyzes the phosphorylation of riboflavin (vitamin B2) to form flavin mononucleotide (FMN) coenzyme. In Pyricularia oryzae (strain 70-15 / ATCC MYA-4617 / FGSC 8958) (Rice blast fungus), this protein is Riboflavin kinase (FMN1).